Consider the following 220-residue polypeptide: Probable GTP-binding protein EngB (220 aa).

The 177-residue stretch at 23–199 folds into the EngB-type G domain; sequence SVREVAFAGR…ERVLASWLDI (177 aa). Mg(2+) contacts are provided by Ser38 and Thr60.

It belongs to the TRAFAC class TrmE-Era-EngA-EngB-Septin-like GTPase superfamily. EngB GTPase family. Mg(2+) is required as a cofactor.

Its function is as follows. Necessary for normal cell division and for the maintenance of normal septation. This Dechloromonas aromatica (strain RCB) protein is Probable GTP-binding protein EngB.